The sequence spans 238 residues: Aspartate/glutamate leucyltransferase (238 aa).

It belongs to the R-transferase family. Bpt subfamily.

The protein resides in the cytoplasm. It carries out the reaction N-terminal L-glutamyl-[protein] + L-leucyl-tRNA(Leu) = N-terminal L-leucyl-L-glutamyl-[protein] + tRNA(Leu) + H(+). The catalysed reaction is N-terminal L-aspartyl-[protein] + L-leucyl-tRNA(Leu) = N-terminal L-leucyl-L-aspartyl-[protein] + tRNA(Leu) + H(+). Functions in the N-end rule pathway of protein degradation where it conjugates Leu from its aminoacyl-tRNA to the N-termini of proteins containing an N-terminal aspartate or glutamate. This Shewanella sp. (strain ANA-3) protein is Aspartate/glutamate leucyltransferase.